Reading from the N-terminus, the 236-residue chain is Phosphoribosylaminoimidazole-succinocarboxamide synthase (236 aa).

This sequence belongs to the SAICAR synthetase family.

It catalyses the reaction 5-amino-1-(5-phospho-D-ribosyl)imidazole-4-carboxylate + L-aspartate + ATP = (2S)-2-[5-amino-1-(5-phospho-beta-D-ribosyl)imidazole-4-carboxamido]succinate + ADP + phosphate + 2 H(+). It participates in purine metabolism; IMP biosynthesis via de novo pathway; 5-amino-1-(5-phospho-D-ribosyl)imidazole-4-carboxamide from 5-amino-1-(5-phospho-D-ribosyl)imidazole-4-carboxylate: step 1/2. The polypeptide is Phosphoribosylaminoimidazole-succinocarboxamide synthase (Campylobacter concisus (strain 13826)).